A 573-amino-acid chain; its full sequence is Phosphoenolpyruvate-protein phosphotransferase (573 aa).

The active-site Tele-phosphohistidine intermediate is His-190. Phosphoenolpyruvate contacts are provided by Arg-297 and Arg-333. Residues Glu-432 and Asp-456 each coordinate Mg(2+). Residues 455–456 (ND) and Arg-466 contribute to the phosphoenolpyruvate site. Cys-503 serves as the catalytic Proton donor.

This sequence belongs to the PEP-utilizing enzyme family. In terms of assembly, homodimer. It depends on Mg(2+) as a cofactor.

Its subcellular location is the cytoplasm. The catalysed reaction is L-histidyl-[protein] + phosphoenolpyruvate = N(pros)-phospho-L-histidyl-[protein] + pyruvate. In terms of biological role, general (non sugar-specific) component of the phosphoenolpyruvate-dependent sugar phosphotransferase system (sugar PTS). This major carbohydrate active-transport system catalyzes the phosphorylation of incoming sugar substrates concomitantly with their translocation across the cell membrane. Enzyme I transfers the phosphoryl group from phosphoenolpyruvate (PEP) to the phosphoryl carrier protein (HPr). The chain is Phosphoenolpyruvate-protein phosphotransferase (ptsI) from Priestia megaterium (Bacillus megaterium).